A 141-amino-acid polypeptide reads, in one-letter code: Cystatin (141 aa).

The first 26 residues, 1–26, serve as a signal peptide directing secretion; sequence MVHSQLPVAASLRLLCALLLLPSATM. The Cystatin domain maps to 29 to 129; that stretch reads GGLSPRSVTD…CRFQVWSRPW (101 aa). Residues 73–77 carry the Secondary area of contact motif; the sequence is QVVAG. 2 disulfides stabilise this stretch: Cys-91–Cys-107 and Cys-120–Cys-140.

It belongs to the cystatin family. In terms of tissue distribution, expressed by the venom gland at an extremely low level (at protein level).

The protein resides in the secreted. In terms of biological role, inhibits various C1 cysteine proteases including cathepsin L, papain and cathepsin B. This protein has no toxic activity and its function in the venom is unknown. It may play a role as a housekeeping or regulatory protein. The protein is Cystatin of Cryptophis nigrescens (Eastern small-eyed snake).